We begin with the raw amino-acid sequence, 328 residues long: 4-hydroxythreonine-4-phosphate dehydrogenase (328 aa).

Substrate contacts are provided by His-133 and Thr-134. His-163, His-208, and His-263 together coordinate a divalent metal cation. Lys-271, Asn-280, and Arg-289 together coordinate substrate.

Belongs to the PdxA family. As to quaternary structure, homodimer. It depends on Zn(2+) as a cofactor. Mg(2+) serves as cofactor. Requires Co(2+) as cofactor.

The protein resides in the cytoplasm. The enzyme catalyses 4-(phosphooxy)-L-threonine + NAD(+) = 3-amino-2-oxopropyl phosphate + CO2 + NADH. It participates in cofactor biosynthesis; pyridoxine 5'-phosphate biosynthesis; pyridoxine 5'-phosphate from D-erythrose 4-phosphate: step 4/5. Functionally, catalyzes the NAD(P)-dependent oxidation of 4-(phosphooxy)-L-threonine (HTP) into 2-amino-3-oxo-4-(phosphooxy)butyric acid which spontaneously decarboxylates to form 3-amino-2-oxopropyl phosphate (AHAP). In Chromobacterium violaceum (strain ATCC 12472 / DSM 30191 / JCM 1249 / CCUG 213 / NBRC 12614 / NCIMB 9131 / NCTC 9757 / MK), this protein is 4-hydroxythreonine-4-phosphate dehydrogenase.